The sequence spans 301 residues: Probable 5-dehydro-4-deoxyglucarate dehydratase (301 aa).

It belongs to the DapA family.

It carries out the reaction 5-dehydro-4-deoxy-D-glucarate + H(+) = 2,5-dioxopentanoate + CO2 + H2O. It functions in the pathway carbohydrate acid metabolism; D-glucarate degradation; 2,5-dioxopentanoate from D-glucarate: step 2/2. The polypeptide is Probable 5-dehydro-4-deoxyglucarate dehydratase (Cereibacter sphaeroides (strain ATCC 17029 / ATH 2.4.9) (Rhodobacter sphaeroides)).